Here is a 480-residue protein sequence, read N- to C-terminus: Proline--tRNA ligase (480 aa).

The protein belongs to the class-II aminoacyl-tRNA synthetase family. ProS type 3 subfamily. Homodimer.

It localises to the cytoplasm. It carries out the reaction tRNA(Pro) + L-proline + ATP = L-prolyl-tRNA(Pro) + AMP + diphosphate. In terms of biological role, catalyzes the attachment of proline to tRNA(Pro) in a two-step reaction: proline is first activated by ATP to form Pro-AMP and then transferred to the acceptor end of tRNA(Pro). This chain is Proline--tRNA ligase, found in Mycobacterium leprae (strain Br4923).